A 324-amino-acid polypeptide reads, in one-letter code: Aldo-keto reductase family 1 member C15 (324 aa).

NADP(+) is bound by residues 24-26 (TFA) and Asp-51. Tyr-56 functions as the Proton donor in the catalytic mechanism. His-118 serves as a coordination point for substrate. NADP(+)-binding positions include 167–168 (SN), Gln-191, 217–225 (YSALGSHRD), and 269–281 (LAKSFNEKRIKEN).

The protein belongs to the aldo/keto reductase family. Monomer. Expressed in lung, specifically in bronchiolar club cells, type II alveolar cells and epithelial cells of the duct of the bronchial gland (at protein level). Expressed in gastric parietal cells and in epithelial cells of the large intestine and colon (at protein level). Expressed in brown adipocytes (at protein level). Expressed in vascular endothelial cells (at protein level).

Its subcellular location is the cytoplasm. It carries out the reaction (2E,6E)-farnesol + NADP(+) = (2E,6E)-farnesal + NADPH + H(+). With respect to regulation, the dehydrogenase activity is inhibited by 3',3'',5',5''-tetraiodophenolphthalein, phenolphthalein, genistein, quercetin, zearalenone and diethylstilbestrol. Catalyzes the NADPH-dependent reduction of a variety of substrates including aromatic and aliphatic aldehydes, quinones, ketones, dicarbonyl compounds and 17-ketosteroids. Catalyzes the NADP(+)-dependent oxidation of aromatic, alicyclic and aliphatic alcohols, and 17beta-hydroxysteroids. To a lesser extent, can also catalyze the reduction of some aldoses and ketoses and the oxidation of some sugar alcohols. In the stomach, lung and colon tissues, mediates the reduction of farnesal and geranylgeranial into farnesol and geranylgeraniol respectively. By reducing 4-hydroxy-2-nonenal (HNE), produced during lipid peroxidation, into 1,4-dihydro-2-nonene (DHN), protects vascular endothelial cells from damage elicited by oxidized lipoproteins. The polypeptide is Aldo-keto reductase family 1 member C15 (Rattus norvegicus (Rat)).